Reading from the N-terminus, the 219-residue chain is ATP synthase subunit a (219 aa).

6 helical membrane-spanning segments follow: residues 16 to 36 (LSNWLSMLIPLLFMVMSFWLI), 57 to 79 (LLMGPASFGANILVIALFLFILF), 96 to 116 (LAVTLSLAVPLWISFILYTWI), 122 to 142 (ALAHLVPLGTPAPLMPFMVLM), 158 to 178 (LAANMIAGHLLLTLLGAQGTL), and 184 to 204 (TSIVVFSQIILLMLEFSVAII).

This sequence belongs to the ATPase A chain family. F-type ATPases have 2 components, CF(1) - the catalytic core - and CF(0) - the membrane proton channel. CF(1) has five subunits: alpha(3), beta(3), gamma(1), delta(1), epsilon(1). CF(0) has three main subunits: a, b and c.

It localises to the mitochondrion inner membrane. Mitochondrial membrane ATP synthase (F(1)F(0) ATP synthase or Complex V) produces ATP from ADP in the presence of a proton gradient across the membrane which is generated by electron transport complexes of the respiratory chain. F-type ATPases consist of two structural domains, F(1) - containing the extramembraneous catalytic core and F(0) - containing the membrane proton channel, linked together by a central stalk and a peripheral stalk. During catalysis, ATP synthesis in the catalytic domain of F(1) is coupled via a rotary mechanism of the central stalk subunits to proton translocation. Key component of the proton channel; it may play a direct role in the translocation of protons across the membrane. This Artemia franciscana (Brine shrimp) protein is ATP synthase subunit a (ATP6).